The sequence spans 299 residues: Protoheme IX farnesyltransferase (299 aa).

Helical transmembrane passes span V17–Y37, G41–F61, A91–N111, I113–L133, I141–G161, A168–I188, G207–L227, L228–I248, and I266–L286.

Belongs to the UbiA prenyltransferase family. Protoheme IX farnesyltransferase subfamily.

It localises to the cell inner membrane. It carries out the reaction heme b + (2E,6E)-farnesyl diphosphate + H2O = Fe(II)-heme o + diphosphate. The protein operates within porphyrin-containing compound metabolism; heme O biosynthesis; heme O from protoheme: step 1/1. Converts heme B (protoheme IX) to heme O by substitution of the vinyl group on carbon 2 of heme B porphyrin ring with a hydroxyethyl farnesyl side group. In Ruthia magnifica subsp. Calyptogena magnifica, this protein is Protoheme IX farnesyltransferase.